The primary structure comprises 102 residues: Citrate lyase acyl carrier protein (102 aa).

At Ser-14 the chain carries O-(phosphoribosyl dephospho-coenzyme A)serine.

This sequence belongs to the CitD family. Oligomer with a subunit composition of (alpha,beta,gamma)6.

It localises to the cytoplasm. Covalent carrier of the coenzyme of citrate lyase. This is Citrate lyase acyl carrier protein from Streptococcus equi subsp. zooepidemicus (strain H70).